Here is a 113-residue protein sequence, read N- to C-terminus: Cholecystoxin (113 aa).

Positions 1–20 (MYGGICLCVLLAVLAISSSG) are cleaved as a signal peptide. Positions 21 to 79 (QHISRSLNGNSLAAAIEQNFPEKHRPARTPDSNQRVESNIDEKANLGVLLARYLQKARR) are excised as a propeptide. The segment at 77–97 (ARRGTNGKPPDPKKESQDYLG) is disordered. At Tyr-95 the chain carries Sulfotyrosine. A Phenylalanine amide modification is found at Phe-101. The propeptide occupies 102 to 113 (GRRSAEEYEYSS).

The protein belongs to the gastrin/cholecystokinin family. In terms of tissue distribution, expressed by the mandibular venom gland.

The protein resides in the secreted. Its function is as follows. Cholecystokinin-22: hypotensive neuropeptide that binds cholecystokinin receptor type A receptor (CCKAR). Cholecystokinin-8: hypotensive neuropeptide that binds cholecystokinin receptor type A receptor (CCKAR). This chain is Cholecystoxin, found in Varanus varius (Lace monitor lizard).